The sequence spans 167 residues: NAD(P)H-quinone oxidoreductase subunit I, chloroplastic (167 aa).

4Fe-4S ferredoxin-type domains follow at residues 55-84 (GRIHFEFDKCIACEVCVRVCPIDLPVVDWK) and 95-124 (LNYSIDFGICIFCGNCVEYCPTNCLSMTEE). [4Fe-4S] cluster-binding residues include Cys64, Cys67, Cys70, Cys74, Cys104, Cys107, Cys110, and Cys114.

The protein belongs to the complex I 23 kDa subunit family. In terms of assembly, NDH is composed of at least 16 different subunits, 5 of which are encoded in the nucleus. The cofactor is [4Fe-4S] cluster.

It localises to the plastid. Its subcellular location is the chloroplast thylakoid membrane. The enzyme catalyses a plastoquinone + NADH + (n+1) H(+)(in) = a plastoquinol + NAD(+) + n H(+)(out). The catalysed reaction is a plastoquinone + NADPH + (n+1) H(+)(in) = a plastoquinol + NADP(+) + n H(+)(out). Its function is as follows. NDH shuttles electrons from NAD(P)H:plastoquinone, via FMN and iron-sulfur (Fe-S) centers, to quinones in the photosynthetic chain and possibly in a chloroplast respiratory chain. The immediate electron acceptor for the enzyme in this species is believed to be plastoquinone. Couples the redox reaction to proton translocation, and thus conserves the redox energy in a proton gradient. The sequence is that of NAD(P)H-quinone oxidoreductase subunit I, chloroplastic from Lepidium virginicum (Virginia pepperweed).